We begin with the raw amino-acid sequence, 391 residues long: tRNA(Met) cytidine acetate ligase (391 aa).

ATP contacts are provided by residues 7–20 (IAEYNPLHNGHIYQ), Gly101, Asn153, and Arg178.

Belongs to the TmcAL family.

The protein localises to the cytoplasm. The enzyme catalyses cytidine(34) in elongator tRNA(Met) + acetate + ATP = N(4)-acetylcytidine(34) in elongator tRNA(Met) + AMP + diphosphate. In terms of biological role, catalyzes the formation of N(4)-acetylcytidine (ac(4)C) at the wobble position of elongator tRNA(Met), using acetate and ATP as substrates. First activates an acetate ion to form acetyladenylate (Ac-AMP) and then transfers the acetyl group to tRNA to form ac(4)C34. The chain is tRNA(Met) cytidine acetate ligase from Latilactobacillus sakei subsp. sakei (strain 23K) (Lactobacillus sakei subsp. sakei).